Consider the following 145-residue polypeptide: uncharacterized protein (145 aa).

Positions M1–A20 are cleaved as a signal peptide.

This is an uncharacterized protein from Aedes vexans (Inland floodwater mosquito).